A 350-amino-acid polypeptide reads, in one-letter code: Delta(6)-protoilludene synthase STEHIDRAFT_64702 (350 aa).

Mg(2+) is bound by residues Asp89, Asn225, Ser229, and Glu233. The D(D/E)XX(D/E) motif signature appears at 89-93 (DEHSD). Positions 225–233 (NDIVSYNIE) match the NSE motif motif. Residues Arg314 and Tyr315 each coordinate (2E,6E)-farnesyl diphosphate.

It belongs to the terpene synthase family. Mg(2+) is required as a cofactor. Mn(2+) serves as cofactor. Requires Ca(2+) as cofactor. It depends on Ni(2+) as a cofactor. The cofactor is Co(2+).

It catalyses the reaction (2E,6E)-farnesyl diphosphate = Delta(6)-protoilludene + diphosphate. It carries out the reaction (2E,6E)-farnesyl diphosphate = alpha-selinene + diphosphate. With respect to regulation, ca(2+) switches the cyclization mechanism of delta(6)-protoilludene synthase from 1,11 to 1,10 cyclization which leads to the production of beta-elemene. In terms of biological role, terpene cyclase that catalyzes the cyclization of farnesyl diphosphate (FPP) to delta(6)-protoilludene. In presence of Ca(2+), a significant switch from 1,11 to a dual 1,11/1,10 cyclization occurs, producing beta-elemene as the major product, with lower levels of delta(6)-protoilludene and (E)-beta-caryophyllene, and traces of beta-selinene and alpha-selinene. This is Delta(6)-protoilludene synthase STEHIDRAFT_64702 from Stereum hirsutum (strain FP-91666) (White-rot fungus).